The following is a 229-amino-acid chain: Potassium/proton antiporter CemA (229 aa).

3 helical membrane-spanning segments follow: residues 7 to 27 (FLPLLYLTSIVFLPWWISLSF), 106 to 126 (MILHLSTNITSFIILSGYSIL), and 189 to 209 (IISGLVSTFPVILDTIFKYWI).

This sequence belongs to the CemA family.

The protein localises to the plastid. It is found in the chloroplast inner membrane. The enzyme catalyses K(+)(in) + H(+)(out) = K(+)(out) + H(+)(in). Functionally, contributes to K(+)/H(+) antiport activity by supporting proton efflux to control proton extrusion and homeostasis in chloroplasts in a light-dependent manner to modulate photosynthesis. Prevents excessive induction of non-photochemical quenching (NPQ) under continuous-light conditions. Indirectly promotes efficient inorganic carbon uptake into chloroplasts. The sequence is that of Potassium/proton antiporter CemA from Eucalyptus globulus subsp. globulus (Tasmanian blue gum).